We begin with the raw amino-acid sequence, 284 residues long: Circadian clock oscillator protein KaiA (284 aa).

Residues 1-135 form a psR domain, binds oxidized quinones region; it reads MLSQIAICIW…LRLAPVETMA (135 aa). A KaiA N-terminal domain is found at 1–164; that stretch reads MLSQIAICIW…DLAQRLQERL (164 aa). The tract at residues 165 to 173 is flexible linker; the sequence is GYLGVYYKR. The KaiA C-terminal domain occupies 174-282; it reads DPDRFLRNLP…CEMYRRSIPR (109 aa).

It belongs to the KaiA family. As to quaternary structure, homodimer. The KaiABC complex composition changes during the circadian cycle to control KaiC phosphorylation. Complexes KaiC(6), KaiA(2-4):KaiC(6), KaiB(6):KaiC(6) and KaiC(6):KaiB(6):KaiA(12) are among the most important forms, many form cooperatively. The KaiA:KaiB complex is only found at 20-24 hours in the circadian cycle (subjective night). Binds to the C-terminal A-loop of KaiC via a coiled-coil structure. KaiA and CikA compete for binding to KaiB(fs). CikA copurifies with this protein in the clock complex. Interacts with LdpA.

With respect to regulation, binding of oxidized quinones (produced as darkness falls) prevents KaiA from stimulating KaiC autophosphorylation. In terms of biological role, key component of the KaiABC oscillator complex, which constitutes the main circadian regulator in cyanobacteria. Complex composition changes during the circadian cycle to control KaiC phosphorylation. KaiA stimulates KaiC autophosphorylation, while KaiB sequesters KaiA, leading to KaiC autodephosphorylation. KaiA binding to the KaiC CII domain during the subjective day yields KaiA(2-4):KaiC(6) complexes which stimulate KaiC autophosphorylation. A KaiA dimer is sufficient to enhance KaiC hexamer phosphorylation. Phospho-Ser-431 KaiC accumulation triggers binding of KaiB during the subjective night to form the KaiB(6):KaiC(6) complex, leading to changes in the output regulators CikA and SasA. KaiB(6):KaiC(6) formation exposes a site for KaiA binding on KaiB that sequesters KaiA from KaiC's CII domain, making the KaiC(6):KaiB(6):KaiA(12) complex resulting in KaiC autodephosphorylation. Complete dephosphorylation of KaiC leads to dissociation of KaiA(2):KaiB(1), completing 1 cycle of the Kai oscillator. Functionally, circadian oscillations can be generated in vitro by incubating KaiA, KaiB and KaiC with 1 mM ATP. The cycle is self-sustainable for at least 3 cycles and resistant to temperature changes. A very robust clock is reconstituted with KaiA, KaiB, KaiC, SasA, CikA and RpaA; output is measured by transcription from an appropriate reporter. Its function is as follows. KaiA binds oxidized quinones via its N-terminal PsR domain and is able to sense redox signals directly; quinone analog DBMIB (2,5-dibromo-3-methyl-6-isopropyl-p-benzoquinone) blocks KaiA stimulation of KaiC phosphorylation. The homodimer binds up to 8 quinones in the crystal structure, 3 in the PsR domain and 1 via the C-terminal helical bundle. Binding of oxidized quinone to the KaiA C-terminal domain reduces the phosphorylation of KaiC slightly; quinones may interact in a complex manner with KaiA to mediate clock input. The sequence is that of Circadian clock oscillator protein KaiA from Synechococcus elongatus (strain ATCC 33912 / PCC 7942 / FACHB-805) (Anacystis nidulans R2).